The following is a 197-amino-acid chain: MNLIPTVIEQTSRGERAYDIYSRLLKDRIILLGSAIDDNVANSIVAQLLFLQAEDPDKDISLYINSPGGSITAGMAIYDTMQIIKPKVQTICIGMAASMGAFLLAAGEPGKRFALPNAEVMIHQPLGGAQGQATEIEIAAKRILFLREKLNGILSERTGQPLEVIARDTDRDNFMTAERAKEYGLIDHIMHRSTDNK.

Ser-98 serves as the catalytic Nucleophile. Residue His-123 is part of the active site.

This sequence belongs to the peptidase S14 family. Fourteen ClpP subunits assemble into 2 heptameric rings which stack back to back to give a disk-like structure with a central cavity, resembling the structure of eukaryotic proteasomes.

The protein localises to the cytoplasm. The catalysed reaction is Hydrolysis of proteins to small peptides in the presence of ATP and magnesium. alpha-casein is the usual test substrate. In the absence of ATP, only oligopeptides shorter than five residues are hydrolyzed (such as succinyl-Leu-Tyr-|-NHMec, and Leu-Tyr-Leu-|-Tyr-Trp, in which cleavage of the -Tyr-|-Leu- and -Tyr-|-Trp bonds also occurs).. Its function is as follows. Cleaves peptides in various proteins in a process that requires ATP hydrolysis. Has a chymotrypsin-like activity. Plays a major role in the degradation of misfolded proteins. The protein is ATP-dependent Clp protease proteolytic subunit of Lysinibacillus sphaericus (strain C3-41).